The chain runs to 332 residues: tRNA(Ile)-lysidine synthase (332 aa).

39 to 44 (SGGADS) is an ATP binding site.

The protein belongs to the tRNA(Ile)-lysidine synthase family.

The protein resides in the cytoplasm. The enzyme catalyses cytidine(34) in tRNA(Ile2) + L-lysine + ATP = lysidine(34) in tRNA(Ile2) + AMP + diphosphate + H(+). Ligates lysine onto the cytidine present at position 34 of the AUA codon-specific tRNA(Ile) that contains the anticodon CAU, in an ATP-dependent manner. Cytidine is converted to lysidine, thus changing the amino acid specificity of the tRNA from methionine to isoleucine. This chain is tRNA(Ile)-lysidine synthase, found in Leifsonia xyli subsp. xyli (strain CTCB07).